Consider the following 426-residue polypeptide: Dihydroorotase (426 aa).

Zn(2+) is bound by residues histidine 59 and histidine 61. Residues 61–63 (HLR) and asparagine 93 contribute to the substrate site. The Zn(2+) site is built by aspartate 151, histidine 178, and histidine 232. Residue asparagine 279 coordinates substrate. Residue aspartate 306 coordinates Zn(2+). The active site involves aspartate 306. Substrate-binding positions include histidine 310 and 324-325 (FG).

Belongs to the metallo-dependent hydrolases superfamily. DHOase family. Class I DHOase subfamily. Zn(2+) is required as a cofactor.

It carries out the reaction (S)-dihydroorotate + H2O = N-carbamoyl-L-aspartate + H(+). It participates in pyrimidine metabolism; UMP biosynthesis via de novo pathway; (S)-dihydroorotate from bicarbonate: step 3/3. Functionally, catalyzes the reversible cyclization of carbamoyl aspartate to dihydroorotate. This chain is Dihydroorotase, found in Brevibacillus brevis (strain 47 / JCM 6285 / NBRC 100599).